Here is a 490-residue protein sequence, read N- to C-terminus: Aspartyl/glutamyl-tRNA(Asn/Gln) amidotransferase subunit B (490 aa).

The protein belongs to the GatB/GatE family. GatB subfamily. In terms of assembly, heterotrimer of A, B and C subunits.

The catalysed reaction is L-glutamyl-tRNA(Gln) + L-glutamine + ATP + H2O = L-glutaminyl-tRNA(Gln) + L-glutamate + ADP + phosphate + H(+). It carries out the reaction L-aspartyl-tRNA(Asn) + L-glutamine + ATP + H2O = L-asparaginyl-tRNA(Asn) + L-glutamate + ADP + phosphate + 2 H(+). Allows the formation of correctly charged Asn-tRNA(Asn) or Gln-tRNA(Gln) through the transamidation of misacylated Asp-tRNA(Asn) or Glu-tRNA(Gln) in organisms which lack either or both of asparaginyl-tRNA or glutaminyl-tRNA synthetases. The reaction takes place in the presence of glutamine and ATP through an activated phospho-Asp-tRNA(Asn) or phospho-Glu-tRNA(Gln). This is Aspartyl/glutamyl-tRNA(Asn/Gln) amidotransferase subunit B from Zymomonas mobilis subsp. mobilis (strain ATCC 31821 / ZM4 / CP4).